Consider the following 960-residue polypeptide: Gamma-aminobutyric acid type B receptor subunit 1 (960 aa).

The N-terminal stretch at 1 to 19 (MLLLLLVPLFLRPLGAGGA) is a signal peptide. Over 20 to 590 (QTPNVTSEGC…KTFRFLSQKL (571 aa)) the chain is Extracellular. Asparagine 23 and asparagine 83 each carry an N-linked (GlcNAc...) asparagine glycan. Sushi domains follow at residues 29 to 95 (CQII…PSRC) and 97 to 158 (RICS…HCQV). 3 cysteine pairs are disulfide-bonded: cysteine 99-cysteine 144, cysteine 130-cysteine 156, and cysteine 219-cysteine 245. 4-aminobutanoate is bound by residues serine 246, serine 269, histidine 286, and tyrosine 366. The cysteines at positions 375 and 409 are disulfide-linked. N-linked (GlcNAc...) asparagine glycans are attached at residues asparagine 408 and asparagine 439. Glutamate 465 serves as a coordination point for 4-aminobutanoate. N-linked (GlcNAc...) asparagine glycosylation is found at asparagine 481, asparagine 501, and asparagine 513. Residues 591 to 611 (FISVSVLSSLGIVLAVVCLSF) form a helical membrane-spanning segment. The Cytoplasmic portion of the chain corresponds to 612–630 (NIYNSHVRYIQNSQPNLNN). Residues 631 to 651 (LTAVGCSLALAAVFPLGLDGY) form a helical membrane-spanning segment. Over 652–666 (HIGRSQFPFVCQARL) the chain is Extracellular. Residues 667 to 687 (WLLGLGFSLGYGSMFTKIWWV) traverse the membrane as a helical segment. Residues 688–709 (HTVFTKKEEKKEWRKTLEPWKL) lie on the Cytoplasmic side of the membrane. A helical transmembrane segment spans residues 710–730 (YATVGLLVGMDILTLAIWQIV). Residues 731–767 (DPLHRTIETFAKEEPKEDIDVSILPQLEHCSSKKMNT) are Extracellular-facing. A helical membrane pass occupies residues 768-788 (WLGIFYGYKGLLLLLGIFLAY). The Cytoplasmic segment spans residues 789–803 (ETKSVSTEKINDHRA). Residues 804-824 (VGMAIYNVAVLCLITAPVTMI) traverse the membrane as a helical segment. At 825–832 (LSSQQDAA) the chain is on the extracellular side. Residues 833–853 (FAFASLAIVFSSYITLVVLFV) form a helical membrane-spanning segment. Over 854-960 (PKMRRLITRG…DGSRVHLLYK (107 aa)) the chain is Cytoplasmic. Disordered regions lie at residues 866 to 891 (QSEA…RLLE) and 908 to 960 (VSEL…LLYK). The segment covering 867 to 879 (SEAQDTMKTGSST) has biased composition (polar residues). A coiled-coil region spans residues 868-924 (EAQDTMKTGSSTNNNEEEKSRLLEKENRELEKIIAEKEERVSELRHQLQSRQQIRSR). At threonine 872 the chain carries Phosphothreonine. An interaction with ATF4 region spans residues 887–915 (SRLLEKENRELEKIIAEKEERVSELRHQL). Threonine 929 bears the Phosphothreonine mark.

Belongs to the G-protein coupled receptor 3 family. GABA-B receptor subfamily. As to quaternary structure, heterodimer of GABBR1 and GABBR2. Homodimers may form, but are inactive. Interacts (via C-terminus) with ATF4 (via leucine zipper domain). Interacts with JAKMIP1. Interacts with KCTD8, KCTD12, KCTD12B and KCTD16; this interaction determines the pharmacology and kinetics of the receptor response, the KCTD proteins markedly accelerating the GABA-B response, although to different extents. Expressed in neuronal tissue including cortex, cerebellum and spinal cord. Not detected in non-neuronal tissues including heart, liver, spleen and kidney.

Its subcellular location is the cell membrane. The protein resides in the postsynaptic cell membrane. It is found in the cell projection. The protein localises to the dendrite. Its function is as follows. Component of a heterodimeric G-protein coupled receptor for GABA, formed by GABBR1 and GABBR2. Within the heterodimeric GABA receptor, only GABBR1 seems to bind agonists, while GABBR2 mediates coupling to G proteins. Ligand binding causes a conformation change that triggers signaling via guanine nucleotide-binding proteins (G proteins) and modulates the activity of down-stream effectors, such as adenylate cyclase. Signaling inhibits adenylate cyclase, stimulates phospholipase A2, activates potassium channels, inactivates voltage-dependent calcium-channels and modulates inositol phospholipid hydrolysis. Calcium is required for high affinity binding to GABA. Plays a critical role in the fine-tuning of inhibitory synaptic transmission. Pre-synaptic GABA receptor inhibits neurotransmitter release by down-regulating high-voltage activated calcium channels, whereas postsynaptic GABA receptor decreases neuronal excitability by activating a prominent inwardly rectifying potassium (Kir) conductance that underlies the late inhibitory postsynaptic potentials. Not only implicated in synaptic inhibition but also in hippocampal long-term potentiation, slow wave sleep, muscle relaxation and antinociception. This Mus musculus (Mouse) protein is Gamma-aminobutyric acid type B receptor subunit 1 (Gabbr1).